The primary structure comprises 1029 residues: Multiple C2 domain and transmembrane region protein 6 (1029 aa).

The region spanning Met-1–Lys-111 is the C2 1 domain. The tract at residues Thr-187 to Pro-224 is disordered. C2 domains follow at residues Arg-277 to Tyr-398, Arg-437 to Phe-562, and Phe-605 to Tyr-727. 5 residues coordinate Ca(2+): Asp-310, Asp-316, Asp-363, Asp-365, and Asp-371. 2 helical membrane passes run Leu-864–Ile-884 and Phe-976–Ile-996.

It belongs to the MCTP family. It depends on Ca(2+) as a cofactor. As to expression, expressed in the vascular tissues of cotyledons and rosette leaves. Accumulates in roots caps and shoot apical meristems (SAMs). Observed in flowers.

The protein resides in the cell membrane. It is found in the cytoplasm. Its subcellular location is the endosome membrane. Regulates flowering time under long days. May function as a signaling molecule by regulating the trafficking of other regulators. In Arabidopsis thaliana (Mouse-ear cress), this protein is Multiple C2 domain and transmembrane region protein 6.